The sequence spans 107 residues: Homeobox protein HD-7 (107 aa).

The homeobox DNA-binding region spans 21-80; it reads KPGEKVRKSEFQKEVLKKVYQATPYPTWENKIDIGILISLSPRAVDIWFQNKRHINKGKN.

It localises to the nucleus. The chain is Homeobox protein HD-7 (HD-7) from Encephalitozoon cuniculi (strain GB-M1) (Microsporidian parasite).